The chain runs to 237 residues: Glucosamine-6-phosphate deaminase (237 aa).

D67 serves as the catalytic Proton acceptor; for enolization step. Catalysis depends on N136, which acts as the For ring-opening step. Residue H138 is the Proton acceptor; for ring-opening step of the active site. The For ring-opening step role is filled by E143.

It belongs to the glucosamine/galactosamine-6-phosphate isomerase family. NagB subfamily.

It carries out the reaction alpha-D-glucosamine 6-phosphate + H2O = beta-D-fructose 6-phosphate + NH4(+). It functions in the pathway amino-sugar metabolism; N-acetylneuraminate degradation; D-fructose 6-phosphate from N-acetylneuraminate: step 5/5. Catalyzes the reversible isomerization-deamination of glucosamine 6-phosphate (GlcN6P) to form fructose 6-phosphate (Fru6P) and ammonium ion. The polypeptide is Glucosamine-6-phosphate deaminase (Lysinibacillus sphaericus (strain C3-41)).